A 2617-amino-acid polypeptide reads, in one-letter code: DNA-directed RNA polymerase subunit beta'' (2617 aa).

Zn(2+) is bound by residues Cys-263, Cys-334, Cys-341, and Cys-344.

This sequence belongs to the RNA polymerase beta' chain family. RpoC2 subfamily. As to quaternary structure, in plastids the minimal PEP RNA polymerase catalytic core is composed of four subunits: alpha, beta, beta', and beta''. When a (nuclear-encoded) sigma factor is associated with the core the holoenzyme is formed, which can initiate transcription. Zn(2+) is required as a cofactor.

The protein localises to the plastid. Its subcellular location is the chloroplast. The catalysed reaction is RNA(n) + a ribonucleoside 5'-triphosphate = RNA(n+1) + diphosphate. DNA-dependent RNA polymerase catalyzes the transcription of DNA into RNA using the four ribonucleoside triphosphates as substrates. The protein is DNA-directed RNA polymerase subunit beta'' of Oedogonium cardiacum (Filamentous green alga).